The chain runs to 356 residues: Probable cysteine protease RDL6 (356 aa).

A signal peptide spans 1–26; that stretch reads MGFVRPVCMTILFLLIVFVLSAPSSA. The propeptide at 27 to 132 is activation peptide; it reads MDLPATSGGH…RRYVPLAGDQ (106 aa). 2 N-linked (GlcNAc...) asparagine glycosylation sites follow: asparagine 37 and asparagine 86. Intrachain disulfides connect cysteine 154–cysteine 195, cysteine 188–cysteine 229, and cysteine 288–cysteine 339. The active site involves cysteine 157. Active-site residues include histidine 294 and asparagine 314.

This sequence belongs to the peptidase C1 family.

Probable thiol protease. This chain is Probable cysteine protease RDL6, found in Arabidopsis thaliana (Mouse-ear cress).